The primary structure comprises 435 residues: Probable alpha-galactosidase B (435 aa).

Positions methionine 1 to alanine 18 are cleaved as a signal peptide. Residues cysteine 41 and cysteine 73 are joined by a disulfide bond. An N-linked (GlcNAc...) asparagine glycan is attached at asparagine 81. A disulfide bond links cysteine 123 and cysteine 153. Aspartate 151 serves as the catalytic Nucleophile. N-linked (GlcNAc...) asparagine glycosylation is found at asparagine 158 and asparagine 176. Aspartate 221–alanine 225 is a substrate binding site. A glycan (N-linked (GlcNAc...) asparagine) is linked at asparagine 232. Aspartate 243 (proton donor) is an active-site residue. N-linked (GlcNAc...) asparagine glycosylation occurs at asparagine 378.

Belongs to the glycosyl hydrolase 27 family.

The protein resides in the secreted. The catalysed reaction is Hydrolysis of terminal, non-reducing alpha-D-galactose residues in alpha-D-galactosides, including galactose oligosaccharides, galactomannans and galactolipids.. Hydrolyzes a variety of simple alpha-D-galactoside as well as more complex molecules such as oligosaccharides and polysaccharides. The protein is Probable alpha-galactosidase B (agl1) of Penicillium simplicissimum.